The chain runs to 401 residues: Hemorrhagic metalloproteinase-disintegrin-like kaouthiagin (401 aa).

Positions 14 to 208 (KYIEFYVIVD…DRPQCILNKP (195 aa)) constitute a Peptidase M12B domain. Glu-17 and Asp-101 together coordinate Ca(2+). A glycan (N-linked (GlcNAc...) asparagine) is linked at Asn-112. Intrachain disulfides connect Cys-125–Cys-203, Cys-164–Cys-187, and Cys-166–Cys-171. Position 149 (His-149) interacts with Zn(2+). Residue Glu-150 is part of the active site. His-153 and His-159 together coordinate Zn(2+). Positions 203, 206, 218, 221, 223, 225, 228, and 231 each coordinate Ca(2+). Residues 216 to 285 (PAICGNYFVE…ECPTDSLQRN (70 aa)) enclose the Disintegrin domain. Cystine bridges form between Cys-219–Cys-248, Cys-230–Cys-243, Cys-232–Cys-238, Cys-257–Cys-277, Cys-264–Cys-296, Cys-289–Cys-301, Cys-308–Cys-358, Cys-323–Cys-366, Cys-336–Cys-346, Cys-353–Cys-389, and Cys-383–Cys-394. The short motif at 263-265 (DCD) is the D/ECD-tripeptide element. Ca(2+) contacts are provided by Asp-265, Leu-266, Glu-268, and Asp-280.

The protein belongs to the venom metalloproteinase (M12B) family. P-III subfamily. P-IIIa sub-subfamily. In terms of assembly, monomer. Zn(2+) is required as a cofactor. In terms of tissue distribution, expressed by the venom gland.

It is found in the secreted. Its function is as follows. Snake venom zinc protease that inhibits hemostasis by binding and cleaving the vWF in humans. Also has and inhibitory effect on the collagen-induced platelet aggregation. This chain is Hemorrhagic metalloproteinase-disintegrin-like kaouthiagin, found in Naja kaouthia (Monocled cobra).